A 187-amino-acid chain; its full sequence is MNMSATLILAFAMSMDAFAASIGKGAVLHNPRFRDAIRTGLIFGVIEAITPLIGWALGFFASQYILEWDHWVAFTLLLILGGRMVVEGFKDSPDCRCEKVKNHSLALLVCTAIATSLDAMAIGVGLAFLQVNIFHTAMVIGCATMIMVTLGMMIGRYIGPILGKKAEIIGGLVLIGIGCNILYEHLG.

The next 6 helical transmembrane spans lie at 3 to 23, 41 to 61, 62 to 82, 107 to 129, 143 to 163, and 166 to 186; these read MSATLILAFAMSMDAFAASIG, LIFGVIEAITPLIGWALGFFA, SQYILEWDHWVAFTLLLILGG, LLVCTAIATSLDAMAIGVGLAFL, ATMIMVTLGMMIGRYIGPILG, and AEIIGGLVLIGIGCNILYEHL.

The protein belongs to the MntP (TC 9.B.29) family.

Its subcellular location is the cell inner membrane. Functionally, probably functions as a manganese efflux pump. This Pectobacterium atrosepticum (strain SCRI 1043 / ATCC BAA-672) (Erwinia carotovora subsp. atroseptica) protein is Putative manganese efflux pump MntP.